Consider the following 36-residue polypeptide: uncharacterized protein (36 aa).

Its subcellular location is the mitochondrion. This is an uncharacterized protein from Saccharomyces cerevisiae (strain ATCC 204508 / S288c) (Baker's yeast).